Reading from the N-terminus, the 333-residue chain is MQTPQVTVLGAGSYGTALAICFARKGIPTTLWGRDADKVAVMQTAHENEEYLPACPFPESLKVTADLGEALKDVKNVVVVVPSHSFSSMLKQAKPLLAEHARVAWATKGLEPDSGRLLYEVAEETLGDEHPLAVLSGPTFAIEMAKGLPTAISMSSTDQAFVEELSGLLHCDRSFRVYTNNDFIGVQLGGVVKNVIAIGAGMADGIGFGANARTALITRGLAELTRLGLKLGAKSETFTGMAGLGDLILTCTDNQSRNRRFGMALGQGKGVEEALKSIGQSVEGYRNTREVVALAARNEVEMPICEQIYAVLYEGKEPQQAAIDLLSRERKTE.

NADPH-binding residues include S13, Y14, R34, and K108. The sn-glycerol 3-phosphate site is built by K108, G137, and T139. Residue A141 participates in NADPH binding. K193, D246, S256, R257, and N258 together coordinate sn-glycerol 3-phosphate. The Proton acceptor role is filled by K193. Position 257 (R257) interacts with NADPH. Position 283 (E283) interacts with NADPH.

The protein belongs to the NAD-dependent glycerol-3-phosphate dehydrogenase family.

It localises to the cytoplasm. It carries out the reaction sn-glycerol 3-phosphate + NAD(+) = dihydroxyacetone phosphate + NADH + H(+). It catalyses the reaction sn-glycerol 3-phosphate + NADP(+) = dihydroxyacetone phosphate + NADPH + H(+). Its pathway is membrane lipid metabolism; glycerophospholipid metabolism. Catalyzes the reduction of the glycolytic intermediate dihydroxyacetone phosphate (DHAP) to sn-glycerol 3-phosphate (G3P), the key precursor for phospholipid synthesis. This chain is Glycerol-3-phosphate dehydrogenase [NAD(P)+], found in Idiomarina loihiensis (strain ATCC BAA-735 / DSM 15497 / L2-TR).